Reading from the N-terminus, the 150-residue chain is Large ribosomal subunit protein bL9 (150 aa).

The protein belongs to the bacterial ribosomal protein bL9 family.

Binds to the 23S rRNA. This Paracidovorax citrulli (strain AAC00-1) (Acidovorax citrulli) protein is Large ribosomal subunit protein bL9.